A 190-amino-acid polypeptide reads, in one-letter code: MLLSDRDIRAEIDAGRLGIDPFEDSLVQPSSVDVRLDTLFRVFNNTRYTHIDPAKQQDELTSLVEPSPGEPFVLHPGEFVLGSTLETCTLPDDLAGRLEGKSSLGRLGLLTHSTAGFIDPGFSGHITLELSNVANLPITLWPGMKIGQLCLLRLTSPAEHPYGSAKVGSKYQGQRGPTPSRSYQNFIKLS.

Residues 101-106 (KSSLGR), Asp-119, 127-129 (TLE), Gln-148, Tyr-162, and Gln-174 contribute to the dCTP site. Glu-129 functions as the Proton donor/acceptor in the catalytic mechanism. Positions 162-184 (YGSAKVGSKYQGQRGPTPSRSYQ) are disordered. Residues 171 to 184 (YQGQRGPTPSRSYQ) are compositionally biased toward polar residues.

The protein belongs to the dCTP deaminase family. In terms of assembly, homotrimer.

It catalyses the reaction dCTP + 2 H2O = dUMP + NH4(+) + diphosphate. Its pathway is pyrimidine metabolism; dUMP biosynthesis; dUMP from dCTP: step 1/1. Bifunctional enzyme that catalyzes both the deamination of dCTP to dUTP and the hydrolysis of dUTP to dUMP without releasing the toxic dUTP intermediate. The chain is dCTP deaminase, dUMP-forming from Mycobacterium sp. (strain JLS).